A 121-amino-acid polypeptide reads, in one-letter code: Methylglyoxal synthase (121 aa).

Residues 1 to 121 (MMKVALIAHD…SAELFLRALN (121 aa)) form the MGS-like domain. Substrate is bound by residues H9, K13, 35–38 (TGTT), and 55–56 (SG). Catalysis depends on D61, which acts as the Proton donor/acceptor. H88 serves as a coordination point for substrate.

It belongs to the methylglyoxal synthase family.

It catalyses the reaction dihydroxyacetone phosphate = methylglyoxal + phosphate. Catalyzes the formation of methylglyoxal from dihydroxyacetone phosphate. The sequence is that of Methylglyoxal synthase from Carboxydothermus hydrogenoformans (strain ATCC BAA-161 / DSM 6008 / Z-2901).